Reading from the N-terminus, the 274-residue chain is Putative pyruvate, phosphate dikinase regulatory protein 1 (274 aa).

Residue 149–156 (GISRTSKT) participates in ADP binding.

It belongs to the pyruvate, phosphate/water dikinase regulatory protein family. PDRP subfamily.

The catalysed reaction is N(tele)-phospho-L-histidyl/L-threonyl-[pyruvate, phosphate dikinase] + ADP = N(tele)-phospho-L-histidyl/O-phospho-L-threonyl-[pyruvate, phosphate dikinase] + AMP + H(+). It carries out the reaction N(tele)-phospho-L-histidyl/O-phospho-L-threonyl-[pyruvate, phosphate dikinase] + phosphate + H(+) = N(tele)-phospho-L-histidyl/L-threonyl-[pyruvate, phosphate dikinase] + diphosphate. Functionally, bifunctional serine/threonine kinase and phosphorylase involved in the regulation of the pyruvate, phosphate dikinase (PPDK) by catalyzing its phosphorylation/dephosphorylation. In Listeria monocytogenes serotype 4b (strain F2365), this protein is Putative pyruvate, phosphate dikinase regulatory protein 1.